Consider the following 435-residue polypeptide: Protein SUPPRESSOR OF K(+) TRANSPORT GROWTH DEFECT 1 (435 aa).

Positions 7-72 (EQAIEYVKQA…LRRAEEIRAV (66 aa)) constitute an MIT domain. The tract at residues 73 to 113 (LDEGGSGPGSNGDAAVATRPKTKPKDGEGGGKDGEDPEQSK) is disordered. The span at 95–113 (KPKDGEGGGKDGEDPEQSK) shows a compositional bias: basic and acidic residues. Position 172 to 179 (172 to 179 (GPPGTGKS)) interacts with ATP.

Belongs to the AAA ATPase family. Monomer or homodimer (in nucleotide-free form). Decamer, dodecamer or tetradecamer of two stacked respective homooligomeric rings (when bound to ATP); the dodecameric form seems to be predominant. Interacts with members of the ESCRT-III subcomplex such as LIP5, VPS60-1, VPS2.1, VPS20.1, VPS20.2, VPS24-1, VPS32.1, VPS32.2, CHMP1A and VPS24. Binds to PROS/At4g24370. Mostly expressed in leaves, to a lower extent in seeds, and barely in roots and flowers (at protein level). Particularly expressed in trichomes.

It is found in the cytoplasm. The protein localises to the nucleus. Its subcellular location is the endosome. It localises to the multivesicular body membrane. The protein resides in the prevacuolar compartment membrane. It catalyses the reaction ATP + H2O = ADP + phosphate + H(+). With respect to regulation, activated by LIP5 and PROS. Involved in the transport of biosynthetic membrane proteins from the prevacuolar/endosomal compartment to the vacuole. Required for multivesicular body (MVB) protein sorting. Catalyzes the ATP-dependent dissociation of class E VPS proteins from endosomal membranes, such as the disassembly of the ESCRT-III complex. May also regulate cell cycle. Required during seed development for the formation of mucilage in seed coat and testa. Involved in the maintenance of Na(+)/K(+) homeostasis under salt stress. Required for cell expansion. The polypeptide is Protein SUPPRESSOR OF K(+) TRANSPORT GROWTH DEFECT 1 (Arabidopsis thaliana (Mouse-ear cress)).